The sequence spans 411 residues: Elongation factor 1-gamma (411 aa).

The GST N-terminal domain maps to 3-84 (LTLWSGVNPE…HIARLDRSGG (82 aa)). One can recognise a GST C-terminal domain in the interval 90–216 (TPLEGSQVDM…QGATFGAREG (127 aa)). A disordered region spans residues 212–265 (GAREGGAKGQGRGCARPGREEAERAAAAADGAEEEDEAPREKKKPNPLDELPPS). Residues 214 to 223 (REGGAKGQGR) show a composition bias toward gly residues. The EF-1-gamma C-terminal domain maps to 255 to 411 (KPNPLDELPP…RPVLEGRVFK (157 aa)).

EF-1 is composed of four subunits: alpha, beta, delta, and gamma.

Functionally, probably plays a role in anchoring the complex to other cellular components. The polypeptide is Elongation factor 1-gamma (Trypanosoma cruzi).